The following is a 669-amino-acid chain: Hypoxia-inducible factor 3-alpha (669 aa).

The segment at Met1 to Arg27 is disordered. The segment covering Ser10–Arg27 has biased composition (basic and acidic residues). One can recognise a bHLH domain in the interval Leu14 to His67. The interval Gln77–Leu100 is nuclear localization signal. 2 consecutive PAS domains span residues Gly82–Arg154 and Pro227–Gly297. Residues Gly230–Ala274 form a nuclear export signal region. A disordered region spans residues Glu354 to Leu389. Residues Leu414 to Leu418 carry the LRRLL motif. The segment covering Thr430–Leu444 has biased composition (polar residues). Residues Thr430–Glu451 form a disordered region. Positions Leu452–Asp581 are ODD. Residues Val454–Glu506 form an NTAD region. A Glycyl lysine isopeptide (Lys-Gly) (interchain with G-Cter in ubiquitin) cross-link involves residue Lys467. The short motif at Leu490–Asp497 is the LAPYISMD element. The residue at position 492 (Pro492) is a 4-hydroxyproline. Disordered regions lie at residues Arg523–His600 and Ala619–Asp669. Low complexity-rich tracts occupy residues Leu530–Pro541 and Ser550–Pro564. Residue Lys570 forms a Glycyl lysine isopeptide (Lys-Gly) (interchain with G-Cter in ubiquitin) linkage. Residues Pro629–Pro646 show a composition bias toward low complexity.

In terms of assembly, isoform 2 interacts (via ODD domain) with VHL (via beta domain). Isoform 4 interacts with HIF1A; the interaction inhibits the binding of HIF1A to hypoxia-responsive element (HRE) and HIF1A/ARNT-dependent transcriptional activation. Isoform 4 interacts with ARNT; the interaction occurs in a HIF1A- and DNA-binding-independent manner and does not induce HIF1A/ARNT-dependent transcriptional activation. Isoform 4 interacts with EPAS1. Interacts with BAD, BCL2L2 and MCL1. In terms of processing, in normoxia, hydroxylated on Pro-492 in the oxygen-dependent degradation domain (ODD) by prolyl hydroxylase(s) (PHD). The hydroxylated proline promotes interaction with VHL, initiating rapid ubiquitination and subsequent proteasomal degradation. Ubiquitinated; ubiquitination occurs in a VHL- and oxygen-dependent pathway and subsequently targeted for proteasomal degradation. Expressed in vascular cells (at protein level). Expressed in kidney. Expressed in lung epithelial cells. Expressed in endothelial cells (venous and arterial cells from umbilical cord and aortic endothelial cells) and in vascular smooth muscle cells (aorta). Strongly expressed in the heart, placenta, and skeletal muscle, whereas a weak expression profile was found in the lung, liver, and kidney. Expressed weakly in cell renal cell carcinoma (CC-RCC) compared to normal renal cells. Expression is down-regulated in numerous kidney tumor cells compared to non tumor kidney tissues. Isoform 2 is expressed in heart, placenta, lung, liver, skeletal muscle and pancreas and in numerous cancer cell lines. Isoform 3 and isoform 4 are weakly expressed in heart, placenta, lung, liver, skeletal muscle and pancreas. Isoform 4 is expressed in fetal tissues, such as heart, brain, thymus, lung, liver, skeletal kidney and spleen. Isoform 3 is weakly expressed in fetal tissues, such as liver and kidney.

Its subcellular location is the nucleus. The protein localises to the cytoplasm. It localises to the nucleus speckle. It is found in the mitochondrion. In terms of biological role, acts as a transcriptional regulator in adaptive response to low oxygen tension. Acts as a regulator of hypoxia-inducible gene expression. Functions as an inhibitor of angiogenesis in hypoxic cells of the cornea. Plays a role in the development of the cardiorespiratory system. May also be involved in apoptosis. Attenuates the ability of transcription factor HIF1A to bind to hypoxia-responsive elements (HRE) located within the enhancer/promoter of hypoxia-inducible target genes and hence inhibits HRE-driven transcriptional activation. Also inhibits hypoxia-inducible ARNT-mediated gene expression. Functionally, attenuates the ability of transcription factor HIF1A to bind to hypoxia-responsive elements (HRE) located within the enhancer/promoter of hypoxia-inducible target genes and hence inhibits HRE-driven transcriptional activation. Its function is as follows. Attenuates the ability of transcription factor HIF1A and EPAS1/HIF2A to bind to hypoxia-responsive elements (HRE) located within the enhancer/promoter of hypoxia-inducible target genes and hence inhibits HRE-driven transcriptional activation. May act as a tumor suppressor and inhibits malignant cell transformation. This is Hypoxia-inducible factor 3-alpha from Homo sapiens (Human).